Consider the following 461-residue polypeptide: Vitamin K-dependent protein C (461 aa).

Residues 1–18 form the signal peptide; sequence MWQFRIFLLFASTWGISG. A propeptide spanning residues 19–41 is cleaved from the precursor; that stretch reads VSAHPDPVFSSSEGAHQVLRVRR. The 46-residue stretch at 42-87 folds into the Gla domain; sequence ANSFLEEVRAGSLERECMEEICDFEEAQEIFQNVEDTLAFWIKYFD. Residues Glu-47, Glu-48, Glu-55, Glu-57, Glu-60, Glu-61, Glu-66, Glu-67, Glu-70, and Glu-76 each carry the 4-carboxyglutamate modification. A disulfide bridge links Cys-58 with Cys-63. 9 cysteine pairs are disulfide-bonded: Cys-91–Cys-110, Cys-100–Cys-105, Cys-104–Cys-119, Cys-121–Cys-130, Cys-139–Cys-150, Cys-146–Cys-159, Cys-161–Cys-174, Cys-182–Cys-320, and Cys-239–Cys-255. 2 EGF-like domains span residues 96–131 and 135–175; these read LDHQ…RFCQ and GFQD…MHCR. (3R)-3-hydroxyaspartate is present on Asp-112. The region spanning 213-450 is the Peptidase S1 domain; sequence IVNGTLTKQG…YLKWIHSYIG (238 aa). Asn-215 is a glycosylation site (N-linked (GlcNAc...) asparagine). The active-site Charge relay system is His-254. Residue Asn-291 is glycosylated (N-linked (GlcNAc...) asparagine). The active-site Charge relay system is Asp-300. The N-linked (GlcNAc...) asparagine glycan is linked to Asn-355. Intrachain disulfides connect Cys-373–Cys-387 and Cys-398–Cys-426. Ser-402 acts as the Charge relay system in catalysis.

It belongs to the peptidase S1 family. As to quaternary structure, synthesized as a single chain precursor, which is cleaved into a light chain and a heavy chain held together by a disulfide bond. The enzyme is then activated by thrombin, which cleaves a tetradecapeptide from the amino end of the heavy chain; this reaction, which occurs at the surface of endothelial cells, is strongly promoted by thrombomodulin. In terms of processing, the vitamin K-dependent, enzymatic carboxylation of some Glu residues allows the modified protein to bind calcium. The iron and 2-oxoglutarate dependent 3-hydroxylation of aspartate and asparagine is (R) stereospecific within EGF domains. Plasma; synthesized in the liver.

It localises to the secreted. The protein resides in the golgi apparatus. The protein localises to the endoplasmic reticulum. The enzyme catalyses Degradation of blood coagulation factors Va and VIIIa.. Protein C is a vitamin K-dependent serine protease that regulates blood coagulation by inactivating factors Va and VIIIa in the presence of calcium ions and phospholipids. Exerts a protective effect on the endothelial cell barrier function. This is Vitamin K-dependent protein C (Proc) from Rattus norvegicus (Rat).